We begin with the raw amino-acid sequence, 132 residues long: Small ribosomal subunit protein uS8 (132 aa).

This sequence belongs to the universal ribosomal protein uS8 family. Part of the 30S ribosomal subunit. Contacts proteins S5 and S12.

In terms of biological role, one of the primary rRNA binding proteins, it binds directly to 16S rRNA central domain where it helps coordinate assembly of the platform of the 30S subunit. The polypeptide is Small ribosomal subunit protein uS8 (Flavobacterium johnsoniae (strain ATCC 17061 / DSM 2064 / JCM 8514 / BCRC 14874 / CCUG 350202 / NBRC 14942 / NCIMB 11054 / UW101) (Cytophaga johnsonae)).